Reading from the N-terminus, the 251-residue chain is Triosephosphate isomerase (251 aa).

9–11 is a substrate binding site; the sequence is NWK. Residue His-94 is the Electrophile of the active site. Glu-166 (proton acceptor) is an active-site residue. Substrate is bound by residues Gly-172, Ser-211, and 232 to 233; that span reads GG.

Belongs to the triosephosphate isomerase family. Homodimer.

Its subcellular location is the cytoplasm. The enzyme catalyses D-glyceraldehyde 3-phosphate = dihydroxyacetone phosphate. Its pathway is carbohydrate biosynthesis; gluconeogenesis. It participates in carbohydrate degradation; glycolysis; D-glyceraldehyde 3-phosphate from glycerone phosphate: step 1/1. Its function is as follows. Involved in the gluconeogenesis. Catalyzes stereospecifically the conversion of dihydroxyacetone phosphate (DHAP) to D-glyceraldehyde-3-phosphate (G3P). The chain is Triosephosphate isomerase from Stenotrophomonas maltophilia (strain R551-3).